The primary structure comprises 413 residues: Serine hydroxymethyltransferase (413 aa).

(6S)-5,6,7,8-tetrahydrofolate contacts are provided by residues leucine 119 and 123 to 125; that span reads GHL. Lysine 228 bears the N6-(pyridoxal phosphate)lysine mark.

This sequence belongs to the SHMT family. As to quaternary structure, homodimer. Pyridoxal 5'-phosphate is required as a cofactor.

It localises to the cytoplasm. The enzyme catalyses (6R)-5,10-methylene-5,6,7,8-tetrahydrofolate + glycine + H2O = (6S)-5,6,7,8-tetrahydrofolate + L-serine. It participates in one-carbon metabolism; tetrahydrofolate interconversion. Its pathway is amino-acid biosynthesis; glycine biosynthesis; glycine from L-serine: step 1/1. Functionally, catalyzes the reversible interconversion of serine and glycine with tetrahydrofolate (THF) serving as the one-carbon carrier. This reaction serves as the major source of one-carbon groups required for the biosynthesis of purines, thymidylate, methionine, and other important biomolecules. Also exhibits THF-independent aldolase activity toward beta-hydroxyamino acids, producing glycine and aldehydes, via a retro-aldol mechanism. The protein is Serine hydroxymethyltransferase of Caldanaerobacter subterraneus subsp. tengcongensis (strain DSM 15242 / JCM 11007 / NBRC 100824 / MB4) (Thermoanaerobacter tengcongensis).